The sequence spans 308 residues: Nuclear transcription factor Y subunit A-5 (308 aa).

Positions 1 to 10 (MQVFQRKEDS) are enriched in basic and acidic residues. 2 disordered regions span residues 1-26 (MQVFQRKEDSSWGNSMPTTNSNIQGS) and 49-71 (GLQLQNQDSTSSQSTEEESGGGE). The span at 11–26 (SWGNSMPTTNSNIQGS) shows a compositional bias: polar residues. Positions 181 to 204 (FVNAKQYHAILRRRKHRAKLEAQN) match the Subunit association domain (SAD) motif. The NFYA/HAP2-type DNA-binding region spans 211 to 236 (KPYLHESRHLHALKRARGSGGRFLNT). A disordered region spans residues 251-273 (MANGQNFSMSPHGGGSGIGSSSI).

The protein belongs to the NFYA/HAP2 subunit family. As to quaternary structure, heterotrimeric transcription factor composed of three components, NF-YA, NF-YB and NF-YC. NF-YB and NF-YC must interact and dimerize for NF-YA association and DNA binding. Expressed in the whole plant, except roots. Present in etiolated seedlings.

It localises to the nucleus. Its function is as follows. Stimulates the transcription of various genes by recognizing and binding to a CCAAT motif in promoters. Involved in the blue light (BL) and abscisic acid (ABA) signaling pathways. In Arabidopsis thaliana (Mouse-ear cress), this protein is Nuclear transcription factor Y subunit A-5 (NFYA5).